Consider the following 237-residue polypeptide: Small ribosomal subunit protein eS4 (237 aa).

An S4 RNA-binding domain is found at 38–110; sequence LPLAVVVRDV…EAKYYDLKPI (73 aa).

The protein belongs to the eukaryotic ribosomal protein eS4 family.

The chain is Small ribosomal subunit protein eS4 from Pyrobaculum calidifontis (strain DSM 21063 / JCM 11548 / VA1).